The sequence spans 293 residues: 4-diphosphocytidyl-2-C-methyl-D-erythritol kinase (293 aa).

Residue Lys23 is part of the active site. Residue 109–119 (PVAAGIGGGSA) coordinates ATP. Asp151 is an active-site residue.

The protein belongs to the GHMP kinase family. IspE subfamily.

The enzyme catalyses 4-CDP-2-C-methyl-D-erythritol + ATP = 4-CDP-2-C-methyl-D-erythritol 2-phosphate + ADP + H(+). It functions in the pathway isoprenoid biosynthesis; isopentenyl diphosphate biosynthesis via DXP pathway; isopentenyl diphosphate from 1-deoxy-D-xylulose 5-phosphate: step 3/6. Catalyzes the phosphorylation of the position 2 hydroxy group of 4-diphosphocytidyl-2C-methyl-D-erythritol. The protein is 4-diphosphocytidyl-2-C-methyl-D-erythritol kinase of Rhizorhabdus wittichii (strain DSM 6014 / CCUG 31198 / JCM 15750 / NBRC 105917 / EY 4224 / RW1) (Sphingomonas wittichii).